Reading from the N-terminus, the 98-residue chain is Small ribosomal subunit protein uS19 (98 aa).

The segment at 77–98 (TRTYRGHAGGKSEKGGSAPRKK) is disordered.

This sequence belongs to the universal ribosomal protein uS19 family.

Functionally, protein S19 forms a complex with S13 that binds strongly to the 16S ribosomal RNA. This Chlorobium phaeobacteroides (strain BS1) protein is Small ribosomal subunit protein uS19.